The sequence spans 244 residues: tRNA pseudouridine synthase A (244 aa).

Asp52 functions as the Nucleophile in the catalytic mechanism. Tyr110 is a substrate binding site.

This sequence belongs to the tRNA pseudouridine synthase TruA family. Homodimer.

The catalysed reaction is uridine(38/39/40) in tRNA = pseudouridine(38/39/40) in tRNA. Functionally, formation of pseudouridine at positions 38, 39 and 40 in the anticodon stem and loop of transfer RNAs. This Clostridium botulinum (strain Alaska E43 / Type E3) protein is tRNA pseudouridine synthase A.